A 98-amino-acid polypeptide reads, in one-letter code: NADH-ubiquinone oxidoreductase chain 4L (98 aa).

3 helical membrane-spanning segments follow: residues 1–21, 29–49, and 61–81; these read MSLVYMNIMMAFTVSLTGLLM, SLLCLEGMMLSLFILATLMIL, and IILLVFAACEAALGLSLLVMV.

This sequence belongs to the complex I subunit 4L family. As to quaternary structure, core subunit of respiratory chain NADH dehydrogenase (Complex I) which is composed of 45 different subunits.

The protein localises to the mitochondrion inner membrane. It carries out the reaction a ubiquinone + NADH + 5 H(+)(in) = a ubiquinol + NAD(+) + 4 H(+)(out). In terms of biological role, core subunit of the mitochondrial membrane respiratory chain NADH dehydrogenase (Complex I) which catalyzes electron transfer from NADH through the respiratory chain, using ubiquinone as an electron acceptor. Part of the enzyme membrane arm which is embedded in the lipid bilayer and involved in proton translocation. This is NADH-ubiquinone oxidoreductase chain 4L (MT-ND4L) from Ovis aries (Sheep).